A 259-amino-acid polypeptide reads, in one-letter code: Ribosomal RNA small subunit methyltransferase A (259 aa).

Positions 13, 15, 39, 60, 84, and 101 each coordinate S-adenosyl-L-methionine.

The protein belongs to the class I-like SAM-binding methyltransferase superfamily. rRNA adenine N(6)-methyltransferase family. RsmA subfamily.

Its subcellular location is the cytoplasm. It catalyses the reaction adenosine(1518)/adenosine(1519) in 16S rRNA + 4 S-adenosyl-L-methionine = N(6)-dimethyladenosine(1518)/N(6)-dimethyladenosine(1519) in 16S rRNA + 4 S-adenosyl-L-homocysteine + 4 H(+). Its function is as follows. Specifically dimethylates two adjacent adenosines (A1518 and A1519) in the loop of a conserved hairpin near the 3'-end of 16S rRNA in the 30S particle. May play a critical role in biogenesis of 30S subunits. The protein is Ribosomal RNA small subunit methyltransferase A of Mesomycoplasma hyopneumoniae (strain 232) (Mycoplasma hyopneumoniae).